Here is a 669-residue protein sequence, read N- to C-terminus: Trissin receptor (669 aa).

The span at 1–15 shows a compositional bias: polar residues; it reads MIMTMMQTVRAWQQE. The disordered stretch occupies residues 1-90; it reads MIMTMMQTVR…PTGQQPPRLP (90 aa). The Extracellular segment spans residues 1–184; the sequence is MIMTMMQTVR…EYIFDRTDVR (184 aa). Residues 55-74 show a composition bias toward low complexity; sequence NQNNGSPNSSPNQSTSAFRQ. N66 carries an N-linked (GlcNAc...) asparagine glycan. The segment covering 79–89 has biased composition (pro residues); the sequence is HPPTGQQPPRL. N-linked (GlcNAc...) asparagine glycans are attached at residues N120 and N130. The helical transmembrane segment at 185–205 threads the bilayer; the sequence is IIFITLYTLVFCCCFFGNLLV. Topologically, residues 206–217 are cytoplasmic; sequence ILVVTLSRRLRS. A helical transmembrane segment spans residues 218–238; the sequence is ITNFFLANLAFADFCVGLFCV. At 239-269 the chain is on the extracellular side; it reads MQNLSIYLIESWVFGEFLCRMYQFVHSLSYT. A glycan (N-linked (GlcNAc...) asparagine) is linked at N241. C257 and C340 form a disulfide bridge. A helical membrane pass occupies residues 270–290; sequence ASIFILVVICMERYFAIVHPI. Topologically, residues 291–302 are cytoplasmic; the sequence is TCKQILTAARLR. A helical transmembrane segment spans residues 303 to 323; sequence MVIVTVWITSAVYSTPKFVFS. Residues 324 to 350 lie on the Extracellular side of the membrane; it reads KTIKNIHTQDGQEEEICVLDREMFNSK. The helical transmembrane segment at 351–371 threads the bilayer; it reads LLDMINFVLLYVMPLLVMTVL. Residues 372–552 lie on the Cytoplasmic side of the membrane; that stretch reads YSKIAIALWR…SSNVLRARRG (181 aa). The span at 390-401 shows a compositional bias: low complexity; that stretch reads VVQHQHQQPQQP. 2 disordered regions span residues 390 to 481 and 515 to 537; these read VVQH…RGVS and AHHQ…AGAT. Positions 414-429 are enriched in basic residues; that stretch reads MYHHHPHHHHHHHQHH. Gly residues predominate over residues 441–454; sequence VGVGLGGGGGGGPG. Residues 455 to 470 are compositionally biased toward low complexity; sequence PSLASGGSSTTSLSRK. A compositionally biased stretch (gly residues) spans 524 to 534; that stretch reads SVGGGSGGAGA. A helical membrane pass occupies residues 553–573; it reads VVRMLIIFVLTFALCNLPYHA. Topologically, residues 574–595 are extracellular; that stretch reads RKMWQYWSRSYRGDSNFNALLT. Residues 596 to 616 traverse the membrane as a helical segment; the sequence is PLTFLVTYFNSGVNPLLYAFL. Residues 617-669 are Cytoplasmic-facing; it reads SRNFRKGMKELLLCSWKKGKGKSSSNSSMHHKRKALQTHSLPTDTTHIGNEQL. The segment at 635-669 is disordered; that stretch reads GKGKSSSNSSMHHKRKALQTHSLPTDTTHIGNEQL. A compositionally biased stretch (polar residues) spans 653 to 669; sequence QTHSLPTDTTHIGNEQL.

The protein belongs to the G-protein coupled receptor 1 family.

The protein resides in the cell membrane. Its function is as follows. G-protein coupled receptor which is activated by the Trissin peptide in vitro, leading to increased intracellular calcium ion levels. This chain is Trissin receptor, found in Drosophila melanogaster (Fruit fly).